We begin with the raw amino-acid sequence, 242 residues long: Tryptophan synthase alpha chain (242 aa).

Active-site proton acceptor residues include glutamate 31 and aspartate 42.

Belongs to the TrpA family. In terms of assembly, tetramer of two alpha and two beta chains.

The enzyme catalyses (1S,2R)-1-C-(indol-3-yl)glycerol 3-phosphate + L-serine = D-glyceraldehyde 3-phosphate + L-tryptophan + H2O. It participates in amino-acid biosynthesis; L-tryptophan biosynthesis; L-tryptophan from chorismate: step 5/5. Functionally, the alpha subunit is responsible for the aldol cleavage of indoleglycerol phosphate to indole and glyceraldehyde 3-phosphate. The sequence is that of Tryptophan synthase alpha chain from Staphylococcus aureus (strain MRSA252).